Reading from the N-terminus, the 136-residue chain is Aspartate 1-decarboxylase (136 aa).

Catalysis depends on S25, which acts as the Schiff-base intermediate with substrate; via pyruvic acid. The residue at position 25 (S25) is a Pyruvic acid (Ser). T57 is a binding site for substrate. Residue Y58 is the Proton donor of the active site. 73 to 75 (GAA) serves as a coordination point for substrate.

This sequence belongs to the PanD family. As to quaternary structure, heterooctamer of four alpha and four beta subunits. Pyruvate is required as a cofactor. In terms of processing, is synthesized initially as an inactive proenzyme, which is activated by self-cleavage at a specific serine bond to produce a beta-subunit with a hydroxyl group at its C-terminus and an alpha-subunit with a pyruvoyl group at its N-terminus.

The protein localises to the cytoplasm. It carries out the reaction L-aspartate + H(+) = beta-alanine + CO2. It functions in the pathway cofactor biosynthesis; (R)-pantothenate biosynthesis; beta-alanine from L-aspartate: step 1/1. Catalyzes the pyruvoyl-dependent decarboxylation of aspartate to produce beta-alanine. This Corynebacterium glutamicum (strain R) protein is Aspartate 1-decarboxylase.